A 232-amino-acid polypeptide reads, in one-letter code: NAD(P)H-quinone oxidoreductase subunit K 1 (232 aa).

[4Fe-4S] cluster-binding residues include C49, C50, C114, and C145.

The protein belongs to the complex I 20 kDa subunit family. In terms of assembly, NDH-1 can be composed of about 15 different subunits; different subcomplexes with different compositions have been identified which probably have different functions. Requires [4Fe-4S] cluster as cofactor.

It localises to the cell inner membrane. The catalysed reaction is a plastoquinone + NADH + (n+1) H(+)(in) = a plastoquinol + NAD(+) + n H(+)(out). The enzyme catalyses a plastoquinone + NADPH + (n+1) H(+)(in) = a plastoquinol + NADP(+) + n H(+)(out). Functionally, NDH-1 shuttles electrons from an unknown electron donor, via FMN and iron-sulfur (Fe-S) centers, to quinones in the respiratory and/or the photosynthetic chain. The immediate electron acceptor for the enzyme in this species is believed to be plastoquinone. Couples the redox reaction to proton translocation, and thus conserves the redox energy in a proton gradient. Cyanobacterial NDH-1 also plays a role in inorganic carbon-concentration. The chain is NAD(P)H-quinone oxidoreductase subunit K 1 from Gloeobacter violaceus (strain ATCC 29082 / PCC 7421).